The primary structure comprises 428 residues: Adenylosuccinate synthetase (428 aa).

Residues 11–17 (GDEGKGK) and 39–41 (GHT) contribute to the GTP site. Catalysis depends on aspartate 12, which acts as the Proton acceptor. Mg(2+)-binding residues include aspartate 12 and glycine 39. IMP-binding positions include 12-15 (DEGK), 37-40 (NAGH), threonine 130, arginine 144, asparagine 226, threonine 241, and arginine 305. Histidine 40 functions as the Proton donor in the catalytic mechanism. Position 301–307 (301–307 (VTTGRKR)) interacts with substrate. Residues arginine 307, 333–335 (KLD), and 415–417 (GTG) contribute to the GTP site.

This sequence belongs to the adenylosuccinate synthetase family. As to quaternary structure, homodimer. The cofactor is Mg(2+).

The protein localises to the cytoplasm. The enzyme catalyses IMP + L-aspartate + GTP = N(6)-(1,2-dicarboxyethyl)-AMP + GDP + phosphate + 2 H(+). Its pathway is purine metabolism; AMP biosynthesis via de novo pathway; AMP from IMP: step 1/2. Plays an important role in the de novo pathway and in the salvage pathway of purine nucleotide biosynthesis. Catalyzes the first committed step in the biosynthesis of AMP from IMP. The protein is Adenylosuccinate synthetase of Komagataella phaffii (strain GS115 / ATCC 20864) (Yeast).